Consider the following 111-residue polypeptide: Large ribosomal subunit protein uL22 (111 aa).

This sequence belongs to the universal ribosomal protein uL22 family. Part of the 50S ribosomal subunit.

This protein binds specifically to 23S rRNA; its binding is stimulated by other ribosomal proteins, e.g. L4, L17, and L20. It is important during the early stages of 50S assembly. It makes multiple contacts with different domains of the 23S rRNA in the assembled 50S subunit and ribosome. In terms of biological role, the globular domain of the protein is located near the polypeptide exit tunnel on the outside of the subunit, while an extended beta-hairpin is found that lines the wall of the exit tunnel in the center of the 70S ribosome. The polypeptide is Large ribosomal subunit protein uL22 (Clostridium acetobutylicum (strain ATCC 824 / DSM 792 / JCM 1419 / IAM 19013 / LMG 5710 / NBRC 13948 / NRRL B-527 / VKM B-1787 / 2291 / W)).